A 629-amino-acid polypeptide reads, in one-letter code: ATP-dependent RNA helicase DeaD (629 aa).

Positions 6–34 (TTFADLGLKAPILEALNDLGYEKPSPIQA) match the Q motif motif. The region spanning 37 to 208 (IPHLLNGRDV…RRFMKEPQEV (172 aa)) is the Helicase ATP-binding domain. Residue 50-57 (AQTGSGKT) participates in ATP binding. Positions 156–159 (DEAD) match the DEAD box motif. The 148-residue stretch at 232-379 (KNEALVRFLE…EVELPNAELL (148 aa)) folds into the Helicase C-terminal domain. Disordered stretches follow at residues 438–481 (LIVP…RERR) and 560–629 (LGDA…GGDA). Composition is skewed to basic and acidic residues over residues 446–481 (MRPKREFRDRDDRGPRDRNDRGPRGDREDRPRRERR) and 568–629 (GGER…GGDA).

It belongs to the DEAD box helicase family. DeaD/CsdA subfamily. As to quaternary structure, interacts with the 50S ribosomal subunit upon shifting to 15 degrees Celsius. Also found associated with the RNA degradosome at 15 degrees Celsius; binds RNase E (rne).

The protein resides in the cytoplasm. It catalyses the reaction ATP + H2O = ADP + phosphate + H(+). DEAD-box RNA helicase involved in various cellular processes at low temperature, including ribosome biogenesis, mRNA degradation and translation initiation. Exhibits RNA-stimulated ATP hydrolysis and RNA unwinding activity at low temperature. Involved in 50S ribosomal subunit assembly, acting after SrmB, and could also play a role in the biogenesis of the 30S ribosomal subunit. In addition, is involved in mRNA decay, via formation of a cold-shock degradosome with RNase E. Also stimulates translation of some mRNAs, probably at the level of initiation. This chain is ATP-dependent RNA helicase DeaD, found in Escherichia coli (strain K12).